A 275-amino-acid chain; its full sequence is MSNFTAADVKKLRDLTGAGMMDSKKALTEAEGDFDKAVEVLRVKGAKDVGKRAGRTAANGLVAHSGKALLELNCETDFVAKTDSFVALAQQLVEHGERTGVNSAEELLASEIDGKGVAELIQEQSAKIGEKLVLNRFAKLDGTVAVYLHRKAQDLPPAVGVLVQYTGRTDEAGDADARGVAMQIAAMRPQYLSRDEVPAEVVESERRIAEQTAREENKPEAALPKIVEGRVNSFFKDFVLLEQASVTDNKKPVRQVLAEAGVEVTRFVRFEVGQA.

The segment at 76 to 79 is involved in Mg(2+) ion dislocation from EF-Tu; the sequence is TDFV.

The protein belongs to the EF-Ts family.

It is found in the cytoplasm. In terms of biological role, associates with the EF-Tu.GDP complex and induces the exchange of GDP to GTP. It remains bound to the aminoacyl-tRNA.EF-Tu.GTP complex up to the GTP hydrolysis stage on the ribosome. This is Elongation factor Ts from Salinispora tropica (strain ATCC BAA-916 / DSM 44818 / JCM 13857 / NBRC 105044 / CNB-440).